Consider the following 335-residue polypeptide: MEERNKTLGEFIIENQQSFQYSSGELSRIINSIRLAAKVVNYKVNKAGLVDIVGAAGEQNIQGEDQQKLDVYANEIFIQTLINREIVCGIASEENDDFITVAGSDNSHNNKYVVLMDPLDGSSNIDVNVSVGTIFSVFRRITPVGTPVTIEDFLQPGINQVAAGYVIYGTSTMLVYTTGDGVNGFTLNPAIGTFYLSHPNMKYSKDGHIYSMNEGNYVHFPQGVKNYIKYCQSEEGDRPYTSRYIGSLVSDFHRNMIKGGIYIYPTSSKAPKGKLRLLYECSPMAFIAEQAGGKASDGYNRIMEIQPTELHQRVPFFCGSYNMVEKAEEFMKNTK.

Glu93, Asp117, Leu119, and Asp120 together coordinate Mg(2+). Substrate contacts are provided by residues 120-123, Asn213, Tyr244, and Lys274; that span reads DGSS. Mg(2+) is bound at residue Glu280.

This sequence belongs to the FBPase class 1 family. Homotetramer. Requires Mg(2+) as cofactor.

The protein localises to the cytoplasm. The catalysed reaction is beta-D-fructose 1,6-bisphosphate + H2O = beta-D-fructose 6-phosphate + phosphate. The protein operates within carbohydrate biosynthesis; gluconeogenesis. This is Fructose-1,6-bisphosphatase class 1 from Flavobacterium psychrophilum (strain ATCC 49511 / DSM 21280 / CIP 103535 / JIP02/86).